Consider the following 690-residue polypeptide: Protein-glucosylgalactosylhydroxylysine glucosidase (690 aa).

299-300 (WD) lines the substrate pocket. The active-site Proton donor is glutamate 429. 497 to 498 (KQ) contacts substrate.

This sequence belongs to the glycosyl hydrolase 65 family.

It carries out the reaction (5R)-5-O-[alpha-D-glucosyl-(1-&gt;2)-beta-D-galactosyl]-5-hydroxy-L-lysyl-[collagen] + H2O = (5R)-5-O-(beta-D-galactosyl)-5-hydroxy-L-lysyl-[collagen] + D-glucose. Functionally, catalyzes the hydrolysis of glucose from the disaccharide unit linked to hydroxylysine residues of collagen and collagen-like proteins. In Mus musculus (Mouse), this protein is Protein-glucosylgalactosylhydroxylysine glucosidase.